A 485-amino-acid chain; its full sequence is E3 ubiquitin-protein ligase TRIM34B (485 aa).

An RING-type zinc finger spans residues 15–58; the sequence is CPVCQELLTKALSLGCGHLVCQACLISNKNAVINPRGKSSCPVC. The segment at 91-127 adopts a B box-type zinc-finger fold; that stretch reads TKRDLCVHHGEKLLLFCKEDKKVICWVCERSQEHRGH. Cysteine 96, histidine 99, cysteine 118, and histidine 124 together coordinate Zn(2+). Positions 136–170 form a coiled coil; that stretch reads VRECQENLQKALTRLRKEQEKVETLEADIKEDRLS. Residues 282–485 form the B30.2/SPRY domain; the sequence is LSGMLQKFRE…APMTLCPLNS (204 aa).

The protein belongs to the TRIM/RBCC family. In terms of assembly, homotrimer. Interacts (via B-box and SPRY domain) with TRIM5.

The protein localises to the cytoplasm. Its subcellular location is the mitochondrion. It catalyses the reaction S-ubiquitinyl-[E2 ubiquitin-conjugating enzyme]-L-cysteine + [acceptor protein]-L-lysine = [E2 ubiquitin-conjugating enzyme]-L-cysteine + N(6)-ubiquitinyl-[acceptor protein]-L-lysine.. Its pathway is protein modification; protein ubiquitination. Its function is as follows. Functions as antiviral protein and contributes to the defense against retroviral infections. Acts as a capsid-specific restriction factor with the help of TRIM5 and prevents infection from non-host-adapted retroviruses. During influenza A virus infection, promotes programmed cell death by targeting ZBP1 for 'Lys-63'-linked polyubiquitination. In turn, promotes ZBP1 recruitment of RIPK3 to mediate virus-induced programmed necrosis. Negatively regulates the function of mitochondria by enhancing mitochondrial depolarization leading to cytochrome c release and mitochondria-dependent apoptosis. Also promotes the formation of multinucleated giant cells by means of cell fusion and phagocytosis in epithelial cells. Regulates intestinal inflammation by controlling the exocytosis of the major component of colonic mucus MUC2 from colonic goblet cells. This Mus musculus (Mouse) protein is E3 ubiquitin-protein ligase TRIM34B.